Here is a 228-residue protein sequence, read N- to C-terminus: Urease accessory protein UreF (228 aa).

The protein belongs to the UreF family. In terms of assembly, ureD, UreF and UreG form a complex that acts as a GTP-hydrolysis-dependent molecular chaperone, activating the urease apoprotein by helping to assemble the nickel containing metallocenter of UreC. The UreE protein probably delivers the nickel.

It is found in the cytoplasm. In terms of biological role, required for maturation of urease via the functional incorporation of the urease nickel metallocenter. The protein is Urease accessory protein UreF of Yersinia enterocolitica serotype O:8 / biotype 1B (strain NCTC 13174 / 8081).